Here is an 86-residue protein sequence, read N- to C-terminus: Small ribosomal subunit protein bS20 (86 aa).

The segment at Met1 to Ser23 is disordered.

It belongs to the bacterial ribosomal protein bS20 family.

Its function is as follows. Binds directly to 16S ribosomal RNA. The sequence is that of Small ribosomal subunit protein bS20 from Buchnera aphidicola subsp. Baizongia pistaciae (strain Bp).